The sequence spans 395 residues: THAP domain-containing protein 5 (395 aa).

A THAP-type zinc finger spans residues M1 to F84. Residues S85–C112 form a disordered region. Basic and acidic residues predominate over residues N90–C112. The HCFC1-binding motif (HBM) motif lies at E321–Y324. Positions L348–I382 form a coiled coil.

As to quaternary structure, interacts with HTRA2; under apoptotic conditions. Interacts with ABRAXAS2. In terms of processing, cleaved by HTRA2 during apoptosis. As to expression, detected in heart. Detected in brain and muscle (at protein level). Highly expressed in the heart. Also found in brain and skeletal muscle.

It is found in the nucleus. Functionally, has sequence-specific DNA-binding activity and can function as transcriptional repressor (in vitro). May be a regulator of cell cycle: THAP5 overexpression in human cell lines causes cell cycle arrest at G2/M phase. The protein is THAP domain-containing protein 5 (THAP5) of Homo sapiens (Human).